The sequence spans 161 residues: Myosin regulatory light chain (161 aa).

Serine 13 and serine 14 each carry phosphoserine. 3 EF-hand domains span residues 20–55 (EQVA…FGVF), 56–91 (VMED…RMKQ), and 93–128 (SNEQ…LGDK).

As to quaternary structure, myosin is a hexamer of 2 heavy chains and 4 light chains (two regulatory light chains and two essential light chains).

This Dictyostelium discoideum (Social amoeba) protein is Myosin regulatory light chain (mlcR).